Reading from the N-terminus, the 439-residue chain is Glucose-1-phosphate adenylyltransferase (439 aa).

Residues Y116, G182, 197–198, and S215 each bind alpha-D-glucose 1-phosphate; that span reads EK.

The protein belongs to the bacterial/plant glucose-1-phosphate adenylyltransferase family. Homotetramer.

It catalyses the reaction alpha-D-glucose 1-phosphate + ATP + H(+) = ADP-alpha-D-glucose + diphosphate. It functions in the pathway glycan biosynthesis; glycogen biosynthesis. Its function is as follows. Involved in the biosynthesis of ADP-glucose, a building block required for the elongation reactions to produce glycogen. Catalyzes the reaction between ATP and alpha-D-glucose 1-phosphate (G1P) to produce pyrophosphate and ADP-Glc. This is Glucose-1-phosphate adenylyltransferase from Pasteurella multocida (strain Pm70).